Consider the following 328-residue polypeptide: MLDPNHLFDITVIGGGPVGMFAAYYAGMRKADVQIIESLPELGGQVATLYPEKEIFDVAGFKGITGAQLTANLAEQLAVFEPTTQLETSVKAILPQEDGTYILETSKGTTHTRGVIVAVGNGAFTPRKLAVDYQPEWENNYIHYFAKEMAQFKDQTVAVAGGGDSAIDWALMLEKVAKQVYIIHRRDQFRGLESSVDALMNSSIQIKTPFLIDGLTEVDHQLALSLNKMKSTDQEQLVVDKLLVNYGFISDTRILRDWGLTLDHHQVSVNQQMATNLPNVYAIGDIATYPGKVKLIASGFGEAPVAVTELLTKLYPEKRQPLHSTSIM.

E37, Q45, Y50, V90, F124, D285, and T325 together coordinate FAD.

The protein belongs to the ferredoxin--NADP reductase type 2 family. Homodimer. FAD serves as cofactor.

It carries out the reaction 2 reduced [2Fe-2S]-[ferredoxin] + NADP(+) + H(+) = 2 oxidized [2Fe-2S]-[ferredoxin] + NADPH. The polypeptide is Ferredoxin--NADP reductase 2 (Latilactobacillus sakei subsp. sakei (strain 23K) (Lactobacillus sakei subsp. sakei)).